The following is a 1450-amino-acid chain: Actin cytoskeleton-regulatory complex protein PAN1 (1450 aa).

Residues 1-140 form a disordered region; that stretch reads MYSNPNNFFG…PPPPVKPQAT (140 aa). 2 stretches are compositionally biased toward low complexity: residues 15 to 37 and 59 to 71; these read GPGA…QQPD and PGLQ…LQPQ. The segment covering 72–83 has biased composition (polar residues); the sequence is FTGYGQTPQQGM. The span at 93-119 shows a compositional bias: low complexity; sequence IPQQYQQQFQQQQTQQQQPQQQQMPFA. Pro residues predominate over residues 120–136; the sequence is AAPPQPTQTLAPPPPVK. 2 EH domains span residues 181–270 and 444–533; these read DQAK…VSSM and EKTR…STRN. 2 consecutive EF-hand domains span residues 214 to 249 and 477 to 512; these read LDGD…CNLK and LEKP…IYRK. 3 disordered regions span residues 600–625, 788–851, and 865–1450; these read RSSA…SNEE, SDQD…WEDA, and LQRS…RVLD. Positions 622-741 form a coiled coil; sequence SNEELSLDQL…ELFRLKDAKA (120 aa). The segment covering 788–850 has biased composition (basic and acidic residues); that stretch reads SDQDAEKRLE…TEHEKRRWED (63 aa). Positions 902-924 are enriched in low complexity; it reads SPASISRTASPAAPPAAGGSYSS. The stretch at 960–1148 forms a coiled coil; the sequence is ETAAQRAERE…LEAMDDDSSS (189 aa). 3 stretches are compositionally biased toward basic and acidic residues: residues 965-997, 1026-1101, and 1110-1140; these read RAER…RLAE, AKPD…EEEK, and EAKE…RQLE. The segment covering 1141–1153 has biased composition (acidic residues); the sequence is AMDDDSSSDDEGP. Residues 1156-1169 show a composition bias toward polar residues; the sequence is ITPQASTPTMNDSH. 2 stretches are compositionally biased toward pro residues: residues 1178 to 1188 and 1222 to 1239; these read QPTPPPAPVVS and APAP…PPQP. Over residues 1265 to 1275 the composition is skewed to basic and acidic residues; it reads RRPDDDGWGSD. Positions 1276-1285 are enriched in acidic residues; that stretch reads KDEEDEESDD. A compositionally biased stretch (polar residues) spans 1314–1323; it reads GDKSATSPTV. Pro residues-rich tracts occupy residues 1327 to 1352, 1361 to 1375, and 1381 to 1411; these read VAPP…PMPG, PGAP…PPMP, and PGAP…PPAA. A WH2 domain is found at 1417–1434; it reads RPAGLLGQIQAGKALKKT.

The protein belongs to the PAN1 family. In terms of assembly, component of the PAN1 actin cytoskeleton-regulatory complex.

It is found in the cell membrane. The protein resides in the endosome membrane. It localises to the cytoplasm. The protein localises to the cytoskeleton. Its subcellular location is the actin patch. In terms of biological role, component of the PAN1 actin cytoskeleton-regulatory complex required for the internalization of endosomes during actin-coupled endocytosis. The complex links the site of endocytosis to the cell membrane-associated actin cytoskeleton. Mediates uptake of external molecules and vacuolar degradation of plasma membrane proteins. Plays a role in the proper organization of the cell membrane-associated actin cytoskeleton and promotes its destabilization. The polypeptide is Actin cytoskeleton-regulatory complex protein PAN1 (PAN1) (Chaetomium globosum (strain ATCC 6205 / CBS 148.51 / DSM 1962 / NBRC 6347 / NRRL 1970) (Soil fungus)).